The following is a 287-amino-acid chain: MALFSKKDKYIRINPNRASREKPQAKPEVPDELFSKCPGCKHTIYQKDLGNDSVCPNCGYNFRISAHERLNLTVDENSFEEMFTGIETKDPLNFPNYQEKLALTREKTGLDEAVLTGTASIKGHKTALGIMDSNFIMASMGTVVGEKITRLFEYATEHKLPVVLFTASGGARMQEGIMSLMQMAKVSAAVQRHSAAGLFYLTVLTDPTTGGVTASFAMEGDIILAETQALVGFAGRRVIESTVREKLPDDFQKAEFLMEHGFVDAIVKRGDMRDTLATLLAFHGGQA.

Residues 33–287 (LFSKCPGCKH…TLLAFHGGQA (255 aa)) enclose the CoA carboxyltransferase N-terminal domain. Residues cysteine 37, cysteine 40, cysteine 55, and cysteine 58 each coordinate Zn(2+). Residues 37-58 (CPGCKHTIYQKDLGNDSVCPNC) form a C4-type zinc finger.

Belongs to the AccD/PCCB family. Acetyl-CoA carboxylase is a heterohexamer composed of biotin carboxyl carrier protein (AccB), biotin carboxylase (AccC) and two subunits each of ACCase subunit alpha (AccA) and ACCase subunit beta (AccD). Zn(2+) is required as a cofactor.

It localises to the cytoplasm. It carries out the reaction N(6)-carboxybiotinyl-L-lysyl-[protein] + acetyl-CoA = N(6)-biotinyl-L-lysyl-[protein] + malonyl-CoA. It participates in lipid metabolism; malonyl-CoA biosynthesis; malonyl-CoA from acetyl-CoA: step 1/1. Its function is as follows. Component of the acetyl coenzyme A carboxylase (ACC) complex. Biotin carboxylase (BC) catalyzes the carboxylation of biotin on its carrier protein (BCCP) and then the CO(2) group is transferred by the transcarboxylase to acetyl-CoA to form malonyl-CoA. This chain is Acetyl-coenzyme A carboxylase carboxyl transferase subunit beta, found in Streptococcus sanguinis (strain SK36).